The sequence spans 394 residues: Flavohemoprotein (394 aa).

The 136-residue stretch at 1–136 (MISQQTIDIV…LANVFITREE (136 aa)) folds into the Globin domain. Residue His-85 coordinates heme b. Active-site charge relay system residues include Tyr-95 and Glu-135. The segment at 147–394 (GGWRGTREFT…YECFGPHKVL (248 aa)) is reductase. In terms of domain architecture, FAD-binding FR-type spans 150–255 (RGTREFTLIE…AAPAGDFFLD (106 aa)). FAD contacts are provided by residues Tyr-188 and 204-207 (RQYS). 268–273 (GVGLTP) provides a ligand contact to NADP(+). 387-390 (CFGP) lines the FAD pocket.

This sequence belongs to the globin family. Two-domain flavohemoproteins subfamily. In the C-terminal section; belongs to the flavoprotein pyridine nucleotide cytochrome reductase family. Requires heme b as cofactor. The cofactor is FAD.

It catalyses the reaction 2 nitric oxide + NADPH + 2 O2 = 2 nitrate + NADP(+) + H(+). The enzyme catalyses 2 nitric oxide + NADH + 2 O2 = 2 nitrate + NAD(+) + H(+). Is involved in NO detoxification in an aerobic process, termed nitric oxide dioxygenase (NOD) reaction that utilizes O(2) and NAD(P)H to convert NO to nitrate, which protects the bacterium from various noxious nitrogen compounds. Therefore, plays a central role in the inducible response to nitrosative stress. This is Flavohemoprotein from Photobacterium profundum (strain SS9).